The chain runs to 383 residues: Probable endoplasmic reticulum-Golgi intermediate compartment protein 3 (383 aa).

The Cytoplasmic portion of the chain corresponds to 1–26 (MLISQLKKFDAYPKTVDDFRVKTYTG). A helical membrane pass occupies residues 27 to 47 (AIVSIIGGVFILWLFFSQVTL). At 48–347 (YFSTDIHHEL…GKSFASFLTN (300 aa)) the chain is on the lumenal side. A helical transmembrane segment spans residues 348–368 (VCAIIGGVFTVFGIFDSFIYY). Residues 369-383 (STKNLQKKIDLGKTF) are Cytoplasmic-facing.

The protein belongs to the ERGIC family.

Its subcellular location is the endoplasmic reticulum-Golgi intermediate compartment membrane. The protein resides in the golgi apparatus. The protein localises to the cis-Golgi network membrane. It is found in the endoplasmic reticulum membrane. Its function is as follows. Possible role in transport between endoplasmic reticulum and Golgi. This is Probable endoplasmic reticulum-Golgi intermediate compartment protein 3 (ergic3) from Dictyostelium discoideum (Social amoeba).